A 434-amino-acid polypeptide reads, in one-letter code: Enolase (434 aa).

Residue Gln163 coordinates (2R)-2-phosphoglycerate. The active-site Proton donor is the Glu205. Mg(2+) contacts are provided by Asp242, Glu291, and Asp318. (2R)-2-phosphoglycerate contacts are provided by Lys343, Arg372, Ser373, and Lys394. The active-site Proton acceptor is the Lys343.

It belongs to the enolase family. Requires Mg(2+) as cofactor.

Its subcellular location is the cytoplasm. The protein resides in the secreted. It localises to the cell surface. The protein localises to the cell wall. It carries out the reaction (2R)-2-phosphoglycerate = phosphoenolpyruvate + H2O. It functions in the pathway carbohydrate degradation; glycolysis; pyruvate from D-glyceraldehyde 3-phosphate: step 4/5. Catalyzes the reversible conversion of 2-phosphoglycerate (2-PG) into phosphoenolpyruvate (PEP). It is essential for the degradation of carbohydrates via glycolysis. This Streptococcus pneumoniae serotype 2 (strain D39 / NCTC 7466) protein is Enolase.